The primary structure comprises 109 residues: RNA-binding protein Hfq (109 aa).

One can recognise a Sm domain in the interval 9–68 (DPFLNALRKEKVNVSVYLVNGIKLQGQVEAFDQFCIVLRNTVNQMVYKHAISTIVPAKSV). The tract at residues 77–109 (PYHQNSNDEQDENVDDIHSDDLEIQENEGNIHE) is disordered.

It belongs to the Hfq family. As to quaternary structure, homohexamer.

In terms of biological role, RNA chaperone that binds small regulatory RNA (sRNAs) and mRNAs to facilitate mRNA translational regulation in response to envelope stress, environmental stress and changes in metabolite concentrations. Also binds with high specificity to tRNAs. This chain is RNA-binding protein Hfq, found in Francisella tularensis subsp. mediasiatica (strain FSC147).